The primary structure comprises 177 residues: Transcriptional repressor NrdR (177 aa).

The segment at 3 to 34 (CLFCQHTDTRVIDSRVSEDGATIRRRRECEAC) is a zinc-finger region. Residues 49 to 139 (PVIIKKDGGR…VYRSFQDVAD (91 aa)) enclose the ATP-cone domain.

It belongs to the NrdR family. Zn(2+) is required as a cofactor.

Its function is as follows. Negatively regulates transcription of bacterial ribonucleotide reductase nrd genes and operons by binding to NrdR-boxes. The chain is Transcriptional repressor NrdR from Xylella fastidiosa (strain M23).